A 408-amino-acid chain; its full sequence is LL-diaminopimelate aminotransferase (408 aa).

Residues Y15 and G42 each coordinate substrate. Pyridoxal 5'-phosphate is bound by residues Y72, 108–109 (SK), Y132, N187, Y218, and 246–248 (SFS). Residues K109, Y132, and N187 each contribute to the substrate site. N6-(pyridoxal phosphate)lysine is present on K249. The pyridoxal 5'-phosphate site is built by R257 and N292. N292 and R388 together coordinate substrate.

The protein belongs to the class-I pyridoxal-phosphate-dependent aminotransferase family. LL-diaminopimelate aminotransferase subfamily. Homodimer. The cofactor is pyridoxal 5'-phosphate.

It catalyses the reaction (2S,6S)-2,6-diaminopimelate + 2-oxoglutarate = (S)-2,3,4,5-tetrahydrodipicolinate + L-glutamate + H2O + H(+). Its pathway is amino-acid biosynthesis; L-lysine biosynthesis via DAP pathway; LL-2,6-diaminopimelate from (S)-tetrahydrodipicolinate (aminotransferase route): step 1/1. In terms of biological role, involved in the synthesis of meso-diaminopimelate (m-DAP or DL-DAP), required for both lysine and peptidoglycan biosynthesis. Catalyzes the direct conversion of tetrahydrodipicolinate to LL-diaminopimelate. This is LL-diaminopimelate aminotransferase from Prochlorococcus marinus (strain MIT 9312).